Reading from the N-terminus, the 199-residue chain is Cytosine-containing mismatch-binding protein 1 (199 aa).

Residues 123–197 constitute a DNA-binding region (HMG box); it reads PKKPSSAFIL…QYDKFMKEAG (75 aa).

In terms of assembly, monomer.

Its subcellular location is the nucleus. In terms of biological role, binds to cytosines in base mismatches and opposite chemically altered guanines. May be involved in repair of DNA damage. The chain is Cytosine-containing mismatch-binding protein 1 from Schizosaccharomyces pombe (strain 972 / ATCC 24843) (Fission yeast).